Consider the following 429-residue polypeptide: Enolase (429 aa).

Gln-163 provides a ligand contact to (2R)-2-phosphoglycerate. The active-site Proton donor is the Glu-205. Residues Asp-242, Glu-287, and Asp-314 each coordinate Mg(2+). (2R)-2-phosphoglycerate contacts are provided by Lys-339, Arg-368, Ser-369, and Lys-390. Lys-339 acts as the Proton acceptor in catalysis.

It belongs to the enolase family. Mg(2+) is required as a cofactor.

The protein resides in the cytoplasm. Its subcellular location is the secreted. It localises to the cell surface. The enzyme catalyses (2R)-2-phosphoglycerate = phosphoenolpyruvate + H2O. The protein operates within carbohydrate degradation; glycolysis; pyruvate from D-glyceraldehyde 3-phosphate: step 4/5. Catalyzes the reversible conversion of 2-phosphoglycerate (2-PG) into phosphoenolpyruvate (PEP). It is essential for the degradation of carbohydrates via glycolysis. This is Enolase from Salinibacter ruber (strain DSM 13855 / M31).